Here is a 443-residue protein sequence, read N- to C-terminus: Glutamine synthetase (443 aa).

The GS beta-grasp domain occupies 16–101 (NGVKFIRLQF…LICDVYKPDG (86 aa)). Residues 108–443 (PRHVLKRANA…WELENYLNKY (336 aa)) enclose the GS catalytic domain. Residues Glu131 and Glu133 each contribute to the Mg(2+) site. Glu183 contacts ATP. 2 residues coordinate Mg(2+): Glu188 and Glu195. L-glutamate is bound by residues 239–240 (NG) and Gly240. His244 is a Mg(2+) binding site. Ser248 contributes to the ATP binding site. Residues Arg297, Glu303, and Arg315 each contribute to the L-glutamate site. Positions 315 and 320 each coordinate ATP. Position 332 (Glu332) interacts with Mg(2+). Arg334 is an L-glutamate binding site.

This sequence belongs to the glutamine synthetase family. As to quaternary structure, oligomer of 12 subunits arranged in the form of two hexagons. In its feedback-inhibited form, interacts with TnrA in order to block its DNA-binding activity. The cofactor is Mg(2+).

The protein resides in the cytoplasm. The enzyme catalyses L-glutamate + NH4(+) + ATP = L-glutamine + ADP + phosphate + H(+). With respect to regulation, inhibited by glutamine. Its function is as follows. Glutamine synthetase (GS) is an unusual multitasking protein that functions as an enzyme, a transcription coregulator, and a chaperone in ammonium assimilation and in the regulation of genes involved in nitrogen metabolism. It catalyzes the ATP-dependent biosynthesis of glutamine from glutamate and ammonia. Feedback-inhibited GlnA also interacts with and regulates the activity of the transcriptional regulator TnrA. During nitrogen limitation, TnrA is in its DNA-binding active state and turns on the transcription of genes required for nitrogen assimilation. Under conditions of nitrogen excess, feedback-inhibited GlnA forms a stable complex with TnrA, which inhibits its DNA-binding activity. In contrast, feedback-inhibited GlnA acts as a chaperone to stabilize the DNA-binding activity of GlnR, which represses the transcription of nitrogen assimilation genes. This Clostridium saccharobutylicum protein is Glutamine synthetase.